A 623-amino-acid chain; its full sequence is C2H2-type transcription factor zfpA (623 aa).

The span at 202-219 shows a compositional bias: polar residues; sequence GLAVSSPMPNSGPHSRSV. Disordered stretches follow at residues 202–256 and 468–493; these read GLAV…EKGR and SNKANSSLGSRPIMGNHNAVTKNGKA. The segment covering 227-239 has biased composition (low complexity); the sequence is SISSTNSRRSQLS. Residues 255-276 form a C2H2-type zinc finger; sequence GRCPHPDCGRVFKDLKAHMLTH.

It localises to the nucleus. Transcription factor involved in fungal growth and virulence potential. Negatively regulates antifungal drug susceptibility via transcriptional inhibition of the expressions of drug efflux pumps in a crzA-dependent way. Under the treatment of azoles, both zfpA and crzA transfer to nuclei and coregulate the expression of multidrug transporters and then keep normal drug susceptibility in fungal cells. This chain is C2H2-type transcription factor zfpA, found in Aspergillus fumigatus (strain CBS 144.89 / FGSC A1163 / CEA10) (Neosartorya fumigata).